Consider the following 353-residue polypeptide: Mitochondrial import inner membrane translocase subunit TIM50 (353 aa).

Residues 1–21 constitute a mitochondrion transit peptide; that stretch reads MAASAALFSRLRSGLRVGARG. Residues 22-65 lie on the Mitochondrial matrix side of the membrane; it reads LCTRLAPPPPRTPEQVTEIANRGGSKAQGPQHQPGSEGPSYAKK. The interval 24-59 is disordered; that stretch reads TRLAPPPPRTPEQVTEIANRGGSKAQGPQHQPGSEG. The helical transmembrane segment at 66–86 threads the bilayer; the sequence is IALWIAGLLGAGGTVSIVYIF. Residues 87–353 lie on the Mitochondrial intermembrane side of the membrane; sequence GNNPVDENGT…SRLWPRSKQP (267 aa). One can recognise an FCP1 homology domain in the interval 143–286; that stretch reads YYQPPYTLVL…LDLSAFLKTI (144 aa). Position 341 is a phosphoserine (S341).

The protein belongs to the TIM50 family. Component of the TIM23 complex at least composed of TIMM23, TIMM17 (TIMM17A or TIMM17B) and TIMM50; within this complex, directly interacts with TIMM23. The complex interacts with the TIMM44 component of the PAM complex and with DNAJC15.

Its subcellular location is the mitochondrion inner membrane. Functionally, essential component of the TIM23 complex, a complex that mediates the translocation of transit peptide-containing proteins across the mitochondrial inner membrane. Has some phosphatase activity in vitro; however such activity may not be relevant in vivo. This is Mitochondrial import inner membrane translocase subunit TIM50 (Timm50) from Mus musculus (Mouse).